A 292-amino-acid chain; its full sequence is 11-beta-hydroxysteroid dehydrogenase 1 (292 aa).

Topologically, residues 1-7 (MAFMKKY) are cytoplasmic. A helical; Signal-anchor for type II membrane protein membrane pass occupies residues 8-24 (LLPILGLFMAYYYYSAN). Over 25-292 (EEFRPEMLQG…SYNMDRFINK (268 aa)) the chain is Lumenal. NADP(+) contacts are provided by residues 41–67 (GASK…TARS), 92–93 (TM), and 119–121 (NHI). 2 N-linked (GlcNAc...) asparagine glycosylation sites follow: Asn-123 and Asn-162. Ser-170 serves as a coordination point for substrate. Catalysis depends on Tyr-183, which acts as the Proton acceptor. 183-187 (YSASK) provides a ligand contact to NADP(+). N-linked (GlcNAc...) asparagine glycosylation is present at Asn-207. 218–222 (IDTET) contacts NADP(+).

Belongs to the short-chain dehydrogenases/reductases (SDR) family. In terms of assembly, homodimer. In terms of processing, glycosylated. Widely expressed, highest expression in liver, lower in testis, ovary, lung, foreskin fibroblasts, and much lower in kidney. Expressed in liver (at protein level). Expressed in the basal cells of the corneal epithelium and in the ciliary nonpigmented epithelium (both at mRNA and at protein level).

The protein resides in the endoplasmic reticulum membrane. It catalyses the reaction an 11beta-hydroxysteroid + NADP(+) = an 11-oxosteroid + NADPH + H(+). It carries out the reaction cortisone + NADPH + H(+) = cortisol + NADP(+). The catalysed reaction is corticosterone + NADP(+) = 11-dehydrocorticosterone + NADPH + H(+). The enzyme catalyses a 7beta-hydroxysteroid + NADP(+) = a 7-oxosteroid + NADPH + H(+). It catalyses the reaction 7-oxocholesterol + NADPH + H(+) = 7beta-hydroxycholesterol + NADP(+). It carries out the reaction chenodeoxycholate + NADP(+) = 7-oxolithocholate + NADPH + H(+). The catalysed reaction is 7-oxolithocholate + NADPH + H(+) = ursodeoxycholate + NADP(+). The enzyme catalyses glycochenodeoxycholate + NADP(+) = 7-oxoglycolithocholate + NADPH + H(+). It catalyses the reaction taurochenodeoxycholate + NADP(+) = 7-oxotaurolithocholate + NADPH + H(+). It carries out the reaction tauroursodeoxycholate + NADP(+) = 7-oxotaurolithocholate + NADPH + H(+). The catalysed reaction is glycoursodeoxycholate + NADP(+) = 7-oxoglycolithocholate + NADPH + H(+). The enzyme catalyses 7-oxopregnenolone + NADPH + H(+) = 7beta-hydroxypregnenolone + NADP(+). It catalyses the reaction 3beta,7alpha-dihydroxyandrost-5-en-17-one + NADP(+) = 3beta-hydroxy-5-androstene-7,17-dione + NADPH + H(+). It carries out the reaction 3beta-hydroxy-5-androstene-7,17-dione + NADPH + H(+) = 3beta,7beta-dihydroxyandrost-5-en-17-one + NADP(+). The catalysed reaction is 3beta-hydroxy-5alpha-androstane-7,17-dione + NADPH + H(+) = 3beta,7beta-dihydroxy-5alpha-androstan-17-one + NADP(+). Its pathway is steroid metabolism. Hexose-6-phosphate dehydrogenase (H6PD) provides cosubstrate NADPH, and the glucose-6-phosphate transporter in the ER-membrane supplies the substrate for H6PDH, their activities stimulate the reduction of cortisone and abolish the oxidation of cortisol. Functionally, controls the reversible conversion of biologically active glucocorticoids such as cortisone to cortisol, and 11-dehydrocorticosterone to corticosterone in the presence of NADP(H). Participates in the corticosteroid receptor-mediated anti-inflammatory response, as well as metabolic and homeostatic processes. Plays a role in the secretion of aqueous humor in the eye, maintaining a normotensive, intraocular environment. Bidirectional in vitro, predominantly functions as a reductase in vivo, thereby increasing the concentration of active glucocorticoids. It has broad substrate specificity, besides glucocorticoids, it accepts other steroid and sterol substrates. Interconverts 7-oxo- and 7-hydroxy-neurosteroids such as 7-oxopregnenolone and 7beta-hydroxypregnenolone, 7-oxodehydroepiandrosterone (3beta-hydroxy-5-androstene-7,17-dione) and 7beta-hydroxydehydroepiandrosterone (3beta,7beta-dihydroxyandrost-5-en-17-one), among others. Catalyzes the stereo-specific conversion of the major dietary oxysterol, 7-ketocholesterol (7-oxocholesterol), into the more polar 7-beta-hydroxycholesterol metabolite. 7-oxocholesterol is one of the most important oxysterols, it participates in several events such as induction of apoptosis, accumulation in atherosclerotic lesions, lipid peroxidation, and induction of foam cell formation. Mediates the 7-oxo reduction of 7-oxolithocholate mainly to chenodeoxycholate, and to a lesser extent to ursodeoxycholate, both in its free form and when conjugated to glycine or taurine, providing a link between glucocorticoid activation and bile acid metabolism. Catalyzes the synthesis of 7-beta-25-dihydroxycholesterol from 7-oxo-25-hydroxycholesterol in vitro, which acts as a ligand for the G-protein-coupled receptor (GPCR) Epstein-Barr virus-induced gene 2 (EBI2) and may thereby regulate immune cell migration. This Homo sapiens (Human) protein is 11-beta-hydroxysteroid dehydrogenase 1.